Here is a 254-residue protein sequence, read N- to C-terminus: Ditrans,polycis-undecaprenyl-diphosphate synthase ((2E,6E)-farnesyl-diphosphate specific) (254 aa).

Asp-25 is an active-site residue. Asp-25 serves as a coordination point for Mg(2+). Substrate-binding positions include 26–29 (GNGR), Trp-30, Arg-38, His-42, and 70–72 (SSE). The active-site Proton acceptor is the Asn-73. Substrate is bound by residues Trp-74, Arg-76, and Arg-193. His-198 is a binding site for Mg(2+). Residue 199-201 (RIS) participates in substrate binding. Position 212 (Glu-212) interacts with Mg(2+).

Belongs to the UPP synthase family. Homodimer. Mg(2+) serves as cofactor.

It catalyses the reaction 8 isopentenyl diphosphate + (2E,6E)-farnesyl diphosphate = di-trans,octa-cis-undecaprenyl diphosphate + 8 diphosphate. Functionally, catalyzes the sequential condensation of isopentenyl diphosphate (IPP) with (2E,6E)-farnesyl diphosphate (E,E-FPP) to yield (2Z,6Z,10Z,14Z,18Z,22Z,26Z,30Z,34E,38E)-undecaprenyl diphosphate (di-trans,octa-cis-UPP). UPP is the precursor of glycosyl carrier lipid in the biosynthesis of bacterial cell wall polysaccharide components such as peptidoglycan and lipopolysaccharide. This Photorhabdus laumondii subsp. laumondii (strain DSM 15139 / CIP 105565 / TT01) (Photorhabdus luminescens subsp. laumondii) protein is Ditrans,polycis-undecaprenyl-diphosphate synthase ((2E,6E)-farnesyl-diphosphate specific).